Reading from the N-terminus, the 215-residue chain is N-(5'-phosphoribosyl)anthranilate isomerase (215 aa).

Belongs to the TrpF family.

The catalysed reaction is N-(5-phospho-beta-D-ribosyl)anthranilate = 1-(2-carboxyphenylamino)-1-deoxy-D-ribulose 5-phosphate. It functions in the pathway amino-acid biosynthesis; L-tryptophan biosynthesis; L-tryptophan from chorismate: step 3/5. In Sinorhizobium medicae (strain WSM419) (Ensifer medicae), this protein is N-(5'-phosphoribosyl)anthranilate isomerase.